The chain runs to 426 residues: Glutamyl-tRNA reductase (426 aa).

Substrate-binding positions include 49 to 52 (TCNR), Ser109, 114 to 116 (EGQ), and Gln120. Residue Cys50 is the Nucleophile of the active site. 189–194 (GAGETG) contacts NADP(+).

This sequence belongs to the glutamyl-tRNA reductase family. As to quaternary structure, homodimer.

It catalyses the reaction (S)-4-amino-5-oxopentanoate + tRNA(Glu) + NADP(+) = L-glutamyl-tRNA(Glu) + NADPH + H(+). The protein operates within porphyrin-containing compound metabolism; protoporphyrin-IX biosynthesis; 5-aminolevulinate from L-glutamyl-tRNA(Glu): step 1/2. It participates in porphyrin-containing compound metabolism; chlorophyll biosynthesis. Catalyzes the NADPH-dependent reduction of glutamyl-tRNA(Glu) to glutamate 1-semialdehyde (GSA). This chain is Glutamyl-tRNA reductase, found in Chlorobium chlorochromatii (strain CaD3).